The following is a 60-amino-acid chain: Cytotoxin 10 (60 aa).

4 disulfide bridges follow: Cys-3-Cys-21, Cys-14-Cys-38, Cys-42-Cys-53, and Cys-54-Cys-59.

This sequence belongs to the three-finger toxin family. Short-chain subfamily. Type IA cytotoxin sub-subfamily. As to quaternary structure, monomer in solution; Homodimer and oligomer in the presence of negatively charged lipids forming a pore with a size ranging between 20 and 30 Angstroms. In terms of tissue distribution, expressed by the venom gland.

Its subcellular location is the secreted. It localises to the target cell membrane. Functionally, shows cytolytic activity on many different cells by forming pore in lipid membranes. In vivo, increases heart rate or kills the animal by cardiac arrest. In addition, it binds to heparin with high affinity, interacts with Kv channel-interacting protein 1 (KCNIP1) in a calcium-independent manner, and binds to integrin alpha-V/beta-3 (ITGAV/ITGB3) with moderate affinity. This Naja annulifera (Banded Egyptian cobra) protein is Cytotoxin 10.